The following is a 262-amino-acid chain: Acyl-[acyl-carrier-protein]--UDP-N-acetylglucosamine O-acyltransferase (262 aa).

The protein belongs to the transferase hexapeptide repeat family. LpxA subfamily. Homotrimer.

It is found in the cytoplasm. It catalyses the reaction a (3R)-hydroxyacyl-[ACP] + UDP-N-acetyl-alpha-D-glucosamine = a UDP-3-O-[(3R)-3-hydroxyacyl]-N-acetyl-alpha-D-glucosamine + holo-[ACP]. Its pathway is glycolipid biosynthesis; lipid IV(A) biosynthesis; lipid IV(A) from (3R)-3-hydroxytetradecanoyl-[acyl-carrier-protein] and UDP-N-acetyl-alpha-D-glucosamine: step 1/6. In terms of biological role, involved in the biosynthesis of lipid A, a phosphorylated glycolipid that anchors the lipopolysaccharide to the outer membrane of the cell. The sequence is that of Acyl-[acyl-carrier-protein]--UDP-N-acetylglucosamine O-acyltransferase from Wigglesworthia glossinidia brevipalpis.